The chain runs to 382 residues: Acetylserotonin O-methyltransferase (382 aa).

Glycine 218, aspartate 241, aspartate 261, methionine 262, and lysine 275 together coordinate S-adenosyl-L-homocysteine. Histidine 279 acts as the Proton acceptor in catalysis. Residues glutamate 308 and glutamate 347 contribute to the active site.

It belongs to the class I-like SAM-binding methyltransferase superfamily. Cation-independent O-methyltransferase family.

The protein resides in the cytoplasm. It carries out the reaction N-acetylserotonin + S-adenosyl-L-methionine = melatonin + S-adenosyl-L-homocysteine + H(+). It participates in aromatic compound metabolism; melatonin biosynthesis; melatonin from serotonin: step 1/2. In terms of biological role, methyltransferase which catalyzes the transfer of a methyl group onto N-acetylserotonin, producing melatonin (N-acetyl-5-methoxytryptamine). Does not seem to possess caffeate O-methyltransferase activity. Implicated in melatonin-dependent circadian dynamics of stomatal aperture to minimize night water loss and promote drought tolerance. Prevents seed germination by promoting melatonin biosynthesis. Promotes melatonin-triggered defense responses to the necrotrophic fungus Botrytis cinerea. Its function is as follows. (Microbial infection) Promotes melatonin-triggered defense responses to the necrotrophic fungus Botrytis cinerea. The sequence is that of Acetylserotonin O-methyltransferase from Arabidopsis thaliana (Mouse-ear cress).